A 317-amino-acid polypeptide reads, in one-letter code: Melanocyte-stimulating hormone receptor (317 aa).

Topologically, residues 1-37 (MVWQGPQRRLLGSLNGTSPATPHFELAANQTGPRCLE) are extracellular. N-linked (GlcNAc...) asparagine glycans are attached at residues Asn-15 and Asn-29. Residues 38 to 63 (VSIPNGLFLSLGLVSVVENVLVVAAI) traverse the membrane as a helical segment. Residues 64-72 (AKNRNLHSP) lie on the Cytoplasmic side of the membrane. Residues 73–93 (MYYFIGCLAVSDLLVSVTNVL) traverse the membrane as a helical segment. Topologically, residues 94–118 (ETAVMLLVEAGALAAQAAVVQQLDD) are extracellular. A helical membrane pass occupies residues 119–140 (IIDVLICGSMVSSLCFLGAIAV). At 141–163 (DRYLSIFYALRYHSIVTLPRAWR) the chain is on the cytoplasmic side. Residues 164-183 (AISAIWVASVLSSTLFIAYY) form a helical membrane-spanning segment. At 184–191 (NHTAVLLC) the chain is on the extracellular side. A helical transmembrane segment spans residues 192–211 (LVSFFVAMLVLMAVLYVHML). Residues 212 to 240 (ARARQHARGIARLRKRQHSVHQGFGLKGA) are Cytoplasmic-facing. The chain crosses the membrane as a helical span at residues 241-266 (ATLTILLGIFFLCWGPFFLHLSLMVL). Residues 267–279 (CPQHPICGCVFQN) lie on the Extracellular side of the membrane. The helical transmembrane segment at 280–300 (FNLFLTLIICNSIIDPFIYAF) threads the bilayer. Residues 301–317 (RSQELRKTLQEVVLCSW) are Cytoplasmic-facing. Cys-315 carries S-palmitoyl cysteine lipidation.

This sequence belongs to the G-protein coupled receptor 1 family. In terms of assembly, interacts with MGRN1, but does not undergo MGRN1-mediated ubiquitination; this interaction competes with GNAS-binding and thus inhibits agonist-induced cAMP production. Interacts with OPN3; the interaction results in a decrease in MC1R-mediated cAMP signaling and ultimately a decrease in melanin production in melanocytes.

Its subcellular location is the cell membrane. Receptor for MSH (alpha, beta and gamma) and ACTH. The activity of this receptor is mediated by G proteins which activate adenylate cyclase. Mediates melanogenesis, the production of eumelanin (black/brown) and phaeomelanin (red/yellow), via regulation of cAMP signaling in melanocytes. In Canis lupus familiaris (Dog), this protein is Melanocyte-stimulating hormone receptor (MC1R).